Reading from the N-terminus, the 542-residue chain is MTRYVFITGGVVSSLGKGLASAALAALLQARGYRVRLRKLDPYLNVDPGTMSPTQHGEVFVTDDGAETDLDLGHYERFTGVPATRADNITTGRIYLDIITKERRGDYLGATIQVIPHVTNAIKEFVLDGNEGYDFVLVEIGGTVGDIEGLPFFEAIRQLGQELPRGQCAYIHLTLLPYIPSAGELKTKPTQHSVAELRSIGIQPDILLCRCDRPIPREERRKLAQFCNVRESAVIEARDVASIYDVPLSYGEEGLDREVLALFGIEATSEPKLDRWRTISERVKNPEGEVSIAIVGKYTGLKDAYKSLIEALTHGGIANRVKVNLEWIEAEIFEREDPAPFLEGLNGILVPGGFGQRGAEGKIRAARYAREKKIPYFGICFGMQMAVVEAARSLAGIPEANSTEFGPTPEPVVGLLTEWMRGNELERRVAEGDLGGTMRLGSYTAKLAPDSRIAEIYGGTAIAERHRHRYEVNMAYRERLEARGMRFSGLSPDGLLPETVEVEGHPWFIGVQFHPELKSRPFEPHPLFKSFIGAAVVQSRLV.

The amidoligase domain stretch occupies residues 1 to 265 (MTRYVFITGG…DREVLALFGI (265 aa)). S13 contacts CTP. Residue S13 coordinates UTP. Residues 14 to 19 (SLGKGL) and D71 contribute to the ATP site. Mg(2+) is bound by residues D71 and E139. CTP-binding positions include 146-148 (DIE), 186-191 (KTKPTQ), and K222. UTP-binding positions include 186–191 (KTKPTQ) and K222. Position 238–240 (238–240 (RDV)) interacts with ATP. The Glutamine amidotransferase type-1 domain maps to 291-541 (SIAIVGKYTG…IGAAVVQSRL (251 aa)). G353 is an L-glutamine binding site. The active-site Nucleophile; for glutamine hydrolysis is C380. Residues 381 to 384 (FGMQ), E404, and R469 contribute to the L-glutamine site. Catalysis depends on residues H514 and E516.

The protein belongs to the CTP synthase family. Homotetramer.

It catalyses the reaction UTP + L-glutamine + ATP + H2O = CTP + L-glutamate + ADP + phosphate + 2 H(+). It carries out the reaction L-glutamine + H2O = L-glutamate + NH4(+). The enzyme catalyses UTP + NH4(+) + ATP = CTP + ADP + phosphate + 2 H(+). Its pathway is pyrimidine metabolism; CTP biosynthesis via de novo pathway; CTP from UDP: step 2/2. Allosterically activated by GTP, when glutamine is the substrate; GTP has no effect on the reaction when ammonia is the substrate. The allosteric effector GTP functions by stabilizing the protein conformation that binds the tetrahedral intermediate(s) formed during glutamine hydrolysis. Inhibited by the product CTP, via allosteric rather than competitive inhibition. In terms of biological role, catalyzes the ATP-dependent amination of UTP to CTP with either L-glutamine or ammonia as the source of nitrogen. Regulates intracellular CTP levels through interactions with the four ribonucleotide triphosphates. This is CTP synthase from Methylobacterium nodulans (strain LMG 21967 / CNCM I-2342 / ORS 2060).